The primary structure comprises 432 residues: Glutamate-1-semialdehyde 2,1-aminomutase 2 (432 aa).

Lysine 268 bears the N6-(pyridoxal phosphate)lysine mark.

Belongs to the class-III pyridoxal-phosphate-dependent aminotransferase family. HemL subfamily. In terms of assembly, homodimer. Requires pyridoxal 5'-phosphate as cofactor.

The protein resides in the cytoplasm. It carries out the reaction (S)-4-amino-5-oxopentanoate = 5-aminolevulinate. It participates in porphyrin-containing compound metabolism; protoporphyrin-IX biosynthesis; 5-aminolevulinate from L-glutamyl-tRNA(Glu): step 2/2. The polypeptide is Glutamate-1-semialdehyde 2,1-aminomutase 2 (Listeria innocua serovar 6a (strain ATCC BAA-680 / CLIP 11262)).